A 300-amino-acid polypeptide reads, in one-letter code: Hairy/enhancer-of-split related with YRPW motif protein 1 (300 aa).

The tract at residues 1 to 52 (MKRGHDYSSSDSELDENIEVEKESADENGNLSSAAGSMSPSTSSQILARKRR) is disordered. Over residues 32–44 (SSAAGSMSPSTSS) the composition is skewed to low complexity. The region spanning 48–103 (ARKRRRGIIEKRRRDRINNSLSELRRLVPSAFEKQGSAKLEKAEILQMTVDHLKML) is the bHLH domain. The Orange domain maps to 121 to 157 (YRSLGFRECLAEVARYLSIIEGMDTTDPLRVRLVSHL). Residues 199-210 (AHTSANSTSSST) are compositionally biased toward low complexity. Disordered regions lie at residues 199 to 232 (AHTS…LRVP) and 278 to 300 (LSPT…IGAF). Positions 290 to 293 (YRPW) match the YRPW motif motif.

Belongs to the HEY family. Efficient DNA binding requires dimerization with another bHLH protein. Binds DNA in the form of homodimer or more strongly as a heterodimer with hes1/hairy1 or hes4/hairy2b. Also weakly interacts with the bHLH proteins hes2, neurod1 and neurod4/ath3. Interacts (via Orange domain) with ccdc89/boip (via C-terminus).

The protein resides in the nucleus. In terms of biological role, downstream effector of Notch signaling. Transcriptional repressor which binds preferentially to the canonical E box sequence 5'-CACGTG-3'. Acts as a suppressor of neurogenesis by antagonizing proneural gene function. Functions during floorplate development. Plays a role in pronephros formation in the inhibition of distal tubule and duct cell fates and the promotion of glomus and proximal tubule formation. The sequence is that of Hairy/enhancer-of-split related with YRPW motif protein 1 (hey1) from Xenopus tropicalis (Western clawed frog).